Reading from the N-terminus, the 498-residue chain is Glycerol kinase (498 aa).

An ADP-binding site is contributed by Thr-12. Residues Thr-12, Thr-13, and Ser-14 each coordinate ATP. Residue Thr-12 participates in sn-glycerol 3-phosphate binding. An ADP-binding site is contributed by Arg-16. The sn-glycerol 3-phosphate site is built by Arg-82, Glu-83, Tyr-134, and Asp-243. Positions 82, 83, 134, 243, and 244 each coordinate glycerol. Residues Thr-265 and Gly-308 each coordinate ADP. ATP is bound by residues Thr-265, Gly-308, Gln-312, and Gly-409. 2 residues coordinate ADP: Gly-409 and Asn-413.

Belongs to the FGGY kinase family. In terms of assembly, homotetramer and homodimer (in equilibrium).

The enzyme catalyses glycerol + ATP = sn-glycerol 3-phosphate + ADP + H(+). Its pathway is polyol metabolism; glycerol degradation via glycerol kinase pathway; sn-glycerol 3-phosphate from glycerol: step 1/1. Its activity is regulated as follows. Activated by phosphorylation and inhibited by fructose 1,6-bisphosphate (FBP). In terms of biological role, key enzyme in the regulation of glycerol uptake and metabolism. Catalyzes the phosphorylation of glycerol to yield sn-glycerol 3-phosphate. This is Glycerol kinase from Clostridium botulinum (strain Okra / Type B1).